Here is a 1407-residue protein sequence, read N- to C-terminus: DNA-directed RNA polymerase subunit beta' (1407 aa).

Zn(2+) contacts are provided by C70, C72, C85, and C88. The Mg(2+) site is built by D460, D462, and D464. Zn(2+) contacts are provided by C814, C888, C895, and C898. Residue K972 is modified to N6-acetyllysine.

It belongs to the RNA polymerase beta' chain family. In terms of assembly, the RNAP catalytic core consists of 2 alpha, 1 beta, 1 beta' and 1 omega subunit. When a sigma factor is associated with the core the holoenzyme is formed, which can initiate transcription. Mg(2+) is required as a cofactor. It depends on Zn(2+) as a cofactor.

It carries out the reaction RNA(n) + a ribonucleoside 5'-triphosphate = RNA(n+1) + diphosphate. Its function is as follows. DNA-dependent RNA polymerase catalyzes the transcription of DNA into RNA using the four ribonucleoside triphosphates as substrates. This Escherichia coli (strain SMS-3-5 / SECEC) protein is DNA-directed RNA polymerase subunit beta'.